Consider the following 274-residue polypeptide: Diaminopimelate epimerase (274 aa).

The substrate site is built by Asn11, Gln44, and Asn64. The active-site Proton donor is Cys73. Residues 74 to 75 (GN), Asn157, Asn190, and 208 to 209 (ER) each bind substrate. Cys217 acts as the Proton acceptor in catalysis. Substrate is bound at residue 218–219 (GS).

Belongs to the diaminopimelate epimerase family. As to quaternary structure, homodimer.

The protein resides in the cytoplasm. The catalysed reaction is (2S,6S)-2,6-diaminopimelate = meso-2,6-diaminopimelate. It functions in the pathway amino-acid biosynthesis; L-lysine biosynthesis via DAP pathway; DL-2,6-diaminopimelate from LL-2,6-diaminopimelate: step 1/1. Its function is as follows. Catalyzes the stereoinversion of LL-2,6-diaminopimelate (L,L-DAP) to meso-diaminopimelate (meso-DAP), a precursor of L-lysine and an essential component of the bacterial peptidoglycan. The protein is Diaminopimelate epimerase of Sodalis glossinidius (strain morsitans).